We begin with the raw amino-acid sequence, 495 residues long: Catalase (495 aa).

The tract at residues 1–25 is disordered; that stretch reads MSNNKKLTSLFGAPVSDRENSMTAG. Active-site residues include histidine 55 and asparagine 128. Tyrosine 338 is a heme binding site.

The protein belongs to the catalase family. Homodimer. Requires heme as cofactor.

The catalysed reaction is 2 H2O2 = O2 + 2 H2O. Functionally, decomposes hydrogen peroxide into water and oxygen; serves to protect cells from the toxic effects of hydrogen peroxide. This is Catalase (katA) from Staphylococcus saprophyticus subsp. saprophyticus (strain ATCC 15305 / DSM 20229 / NCIMB 8711 / NCTC 7292 / S-41).